The primary structure comprises 361 residues: Peptide chain release factor 1 (361 aa).

An N5-methylglutamine modification is found at Gln236.

It belongs to the prokaryotic/mitochondrial release factor family. Post-translationally, methylated by PrmC. Methylation increases the termination efficiency of RF1.

It localises to the cytoplasm. In terms of biological role, peptide chain release factor 1 directs the termination of translation in response to the peptide chain termination codons UAG and UAA. This chain is Peptide chain release factor 1, found in Lactobacillus acidophilus (strain ATCC 700396 / NCK56 / N2 / NCFM).